A 430-amino-acid chain; its full sequence is tRNA(Ile)-lysidine synthase (430 aa).

27 to 32 (SGGSDS) provides a ligand contact to ATP.

This sequence belongs to the tRNA(Ile)-lysidine synthase family.

The protein localises to the cytoplasm. It catalyses the reaction cytidine(34) in tRNA(Ile2) + L-lysine + ATP = lysidine(34) in tRNA(Ile2) + AMP + diphosphate + H(+). In terms of biological role, ligates lysine onto the cytidine present at position 34 of the AUA codon-specific tRNA(Ile) that contains the anticodon CAU, in an ATP-dependent manner. Cytidine is converted to lysidine, thus changing the amino acid specificity of the tRNA from methionine to isoleucine. The polypeptide is tRNA(Ile)-lysidine synthase (Rickettsia bellii (strain RML369-C)).